A 474-amino-acid polypeptide reads, in one-letter code: ATP synthase subunit beta 2 (474 aa).

151-158 (GGAGVGKT) contacts ATP.

Belongs to the ATPase alpha/beta chains family. As to quaternary structure, F-type ATPases have 2 components, CF(1) - the catalytic core - and CF(0) - the membrane proton channel. CF(1) has five subunits: alpha(3), beta(3), gamma(1), delta(1), epsilon(1). CF(0) has four main subunits: a(1), b(1), b'(1) and c(9-12).

It localises to the cell inner membrane. It carries out the reaction ATP + H2O + 4 H(+)(in) = ADP + phosphate + 5 H(+)(out). Functionally, produces ATP from ADP in the presence of a proton gradient across the membrane. The catalytic sites are hosted primarily by the beta subunits. In Dinoroseobacter shibae (strain DSM 16493 / NCIMB 14021 / DFL 12), this protein is ATP synthase subunit beta 2.